A 427-amino-acid chain; its full sequence is Glutamate-1-semialdehyde 2,1-aminomutase (427 aa).

Lysine 267 is modified (N6-(pyridoxal phosphate)lysine).

It belongs to the class-III pyridoxal-phosphate-dependent aminotransferase family. HemL subfamily. Homodimer. Pyridoxal 5'-phosphate is required as a cofactor.

It localises to the cytoplasm. It catalyses the reaction (S)-4-amino-5-oxopentanoate = 5-aminolevulinate. Its pathway is porphyrin-containing compound metabolism; protoporphyrin-IX biosynthesis; 5-aminolevulinate from L-glutamyl-tRNA(Glu): step 2/2. This Geotalea daltonii (strain DSM 22248 / JCM 15807 / FRC-32) (Geobacter daltonii) protein is Glutamate-1-semialdehyde 2,1-aminomutase.